The chain runs to 477 residues: Aspartyl/glutamyl-tRNA(Asn/Gln) amidotransferase subunit B (477 aa).

This sequence belongs to the GatB/GatE family. GatB subfamily. Heterotrimer of A, B and C subunits.

It catalyses the reaction L-glutamyl-tRNA(Gln) + L-glutamine + ATP + H2O = L-glutaminyl-tRNA(Gln) + L-glutamate + ADP + phosphate + H(+). It carries out the reaction L-aspartyl-tRNA(Asn) + L-glutamine + ATP + H2O = L-asparaginyl-tRNA(Asn) + L-glutamate + ADP + phosphate + 2 H(+). Its function is as follows. Allows the formation of correctly charged Asn-tRNA(Asn) or Gln-tRNA(Gln) through the transamidation of misacylated Asp-tRNA(Asn) or Glu-tRNA(Gln) in organisms which lack either or both of asparaginyl-tRNA or glutaminyl-tRNA synthetases. The reaction takes place in the presence of glutamine and ATP through an activated phospho-Asp-tRNA(Asn) or phospho-Glu-tRNA(Gln). This Thioalkalivibrio sulfidiphilus (strain HL-EbGR7) protein is Aspartyl/glutamyl-tRNA(Asn/Gln) amidotransferase subunit B.